Consider the following 103-residue polypeptide: MATETMGIALGMIETRGLVPAIEAADAMTKAAEVRLIGREFVGGGYVTVLVRGETGAVNAAVRAGADACERVGDGLVAAHIIARPHREVEPALGNGDFLGQKD.

Residues 9–94 (ALGMIETRGL…PHREVEPALG (86 aa)) enclose the BMC domain.

This sequence belongs to the bacterial microcompartments protein family. CsoS1 subfamily. In terms of assembly, homohexamer with a small central pore. A CsoS1-CsoS1D-CsoS2 complex can be isolated following expression in E.coli. Forms a CsoS2-CsoS1-RuBisCO complex.

Its subcellular location is the carboxysome. Functionally, the major shell protein of the carboxysome, a polyhedral inclusion where RuBisCO (ribulose bisphosphate carboxylase, ccbL-ccbS) is sequestered. Assembles into hexamers which make sheets that form the facets of the polyhedral carboxysome. There are estimated to be 538 CsoS1 hexamers per carboxysome; note this number includes the probable carboxysome shell vertex proteins CsoS4A and CsoS4B. This chain is Major carboxysome shell protein CsoS1, found in Prochlorococcus marinus subsp. pastoris (strain CCMP1986 / NIES-2087 / MED4).